The primary structure comprises 257 residues: Deoxyribose-phosphate aldolase (257 aa).

Aspartate 102 functions as the Proton donor/acceptor in the catalytic mechanism. The active-site Schiff-base intermediate with acetaldehyde is the lysine 166. The active-site Proton donor/acceptor is lysine 198.

It belongs to the DeoC/FbaB aldolase family. DeoC type 2 subfamily.

The protein resides in the cytoplasm. The enzyme catalyses 2-deoxy-D-ribose 5-phosphate = D-glyceraldehyde 3-phosphate + acetaldehyde. It participates in carbohydrate degradation; 2-deoxy-D-ribose 1-phosphate degradation; D-glyceraldehyde 3-phosphate and acetaldehyde from 2-deoxy-alpha-D-ribose 1-phosphate: step 2/2. Catalyzes a reversible aldol reaction between acetaldehyde and D-glyceraldehyde 3-phosphate to generate 2-deoxy-D-ribose 5-phosphate. The sequence is that of Deoxyribose-phosphate aldolase from Shewanella frigidimarina (strain NCIMB 400).